A 377-amino-acid chain; its full sequence is Protein RecA (377 aa).

66–73 contributes to the ATP binding site; the sequence is GPESSGKT. Residues 329-377 are disordered; it reads VGVRPEEPTAEPGADAAVTSAAAATDDTAKTVSAPAAKTTKSKAAAAKS. Low complexity predominate over residues 342–377; the sequence is ADAAVTSAAAATDDTAKTVSAPAAKTTKSKAAAAKS.

Belongs to the RecA family.

The protein resides in the cytoplasm. Its function is as follows. Can catalyze the hydrolysis of ATP in the presence of single-stranded DNA, the ATP-dependent uptake of single-stranded DNA by duplex DNA, and the ATP-dependent hybridization of homologous single-stranded DNAs. It interacts with LexA causing its activation and leading to its autocatalytic cleavage. In Streptomyces avermitilis (strain ATCC 31267 / DSM 46492 / JCM 5070 / NBRC 14893 / NCIMB 12804 / NRRL 8165 / MA-4680), this protein is Protein RecA.